We begin with the raw amino-acid sequence, 141 residues long: Actin-depolymerizing factor 9 (141 aa).

Ser-8 is subject to Phosphoserine. Residues 8–141 (SGMWMTDDCK…GFDKIQDRAK (134 aa)) enclose the ADF-H domain.

The protein belongs to the actin-binding proteins ADF family.

Its subcellular location is the cytoplasm. The protein localises to the cytoskeleton. Functionally, does not display typical F-actin depolymerizing activity. Exhibits a high ability to stabilize and cross-link actin filaments. Functions as an actin bundling protein with the highest efficiency under acidic conditions. May play a role in the modulation of levels of histone H3 lysine 4 trimethylation and H3 lysine 9 and 14 acetylation at the FLC locus. The protein is Actin-depolymerizing factor 9 (ADF9) of Arabidopsis thaliana (Mouse-ear cress).